We begin with the raw amino-acid sequence, 282 residues long: Bifunctional protein FolD (282 aa).

Residues 164–166 (GRS) and serine 189 each bind NADP(+).

Belongs to the tetrahydrofolate dehydrogenase/cyclohydrolase family. In terms of assembly, homodimer.

It catalyses the reaction (6R)-5,10-methylene-5,6,7,8-tetrahydrofolate + NADP(+) = (6R)-5,10-methenyltetrahydrofolate + NADPH. The enzyme catalyses (6R)-5,10-methenyltetrahydrofolate + H2O = (6R)-10-formyltetrahydrofolate + H(+). It participates in one-carbon metabolism; tetrahydrofolate interconversion. Functionally, catalyzes the oxidation of 5,10-methylenetetrahydrofolate to 5,10-methenyltetrahydrofolate and then the hydrolysis of 5,10-methenyltetrahydrofolate to 10-formyltetrahydrofolate. This Lactobacillus gasseri (strain ATCC 33323 / DSM 20243 / BCRC 14619 / CIP 102991 / JCM 1131 / KCTC 3163 / NCIMB 11718 / NCTC 13722 / AM63) protein is Bifunctional protein FolD.